Consider the following 294-residue polypeptide: Putative HTH-type transcriptional regulatory protein STK_12680 (294 aa).

Residues 123 to 175 enclose the HTH cro/C1-type domain; that stretch reads LKKKREEMGLSLGEVAQALGVSRISIYDYEREDSYVSIDIAEKLVELFGDDIL. The H-T-H motif DNA-binding region spans 134 to 153; sequence LGEVAQALGVSRISIYDYER.

This Sulfurisphaera tokodaii (strain DSM 16993 / JCM 10545 / NBRC 100140 / 7) (Sulfolobus tokodaii) protein is Putative HTH-type transcriptional regulatory protein STK_12680.